A 199-amino-acid polypeptide reads, in one-letter code: TATA-box-binding protein (199 aa).

2 consecutive repeat copies span residues 10-86 (IENI…VKLL) and 101-177 (IQNI…YNQL).

This sequence belongs to the TBP family.

Functionally, general factor that plays a role in the activation of archaeal genes transcribed by RNA polymerase. Binds specifically to the TATA box promoter element which lies close to the position of transcription initiation. The polypeptide is TATA-box-binding protein (Pyrobaculum calidifontis (strain DSM 21063 / JCM 11548 / VA1)).